The following is a 563-amino-acid chain: MHNSSELIAVINGFRNSGRFCDINIVINDERINAHRLMLSGASEYFSILFSSDFIDSNDYEVNLSHLDYQSVNDLIDYIYGIPLSLTNDNVKYILSTADFLQIGSAITECEKYILKNLCSRNCIDFYIYADKYNNKKIESASFNTILRNILRLINDENFKYLTEESMIKILSDDMLNIKNEDFAPLILIKWLESTQQPCTVELLRCLRISLLSPQVIKSLYSHRLVSSIYECITFLNNIAFLDESFPRYHSIELISIGISNSHDKISINCYNRKKNTWEMISSRRYRCSFAVAVLDNIIYMMGGYDQSPYRSSKVIAYNTCTNSWIYDIPELKYPRSNCGGVADDEYIYCIGGIRDQDSSLISSIDRWKPSKPYWQTYAKMREPKCDMGVAMLNGLIYVIGGIVKGDTCTDALESLSEDGWMKHQRLPIKMSNMSTIVHAGKIYISGGYNNSSAVNGPSNLVLSYNPIYDEWTKLSSLNIPRINPALWSAHNKLYVGGGISNDQTTTSETYDKEKDCWTLDNGHVLPRNYIMYKCEPIKHKYPLEKIQYTNDFLKCLESFIDS.

Residues 21-88 (CDINIVINDE…IYGIPLSLTN (68 aa)) form the BTB domain. The BACK domain occupies 123–219 (CIDFYIYADK…SLLSPQVIKS (97 aa)). Kelch repeat units follow at residues 252–297 (IELI…VLDN), 298–346 (IIYM…ADDE), 347–395 (YIYC…MLNG), 397–441 (IYVI…VHAG), 442–492 (KIYI…SAHN), and 494–538 (LYVG…CEPI).

In terms of assembly, interacts (via BTB domain) with host CUL3.

The protein resides in the host cytoplasm. Functionally, probable substrate-specific adapter of CUL3-containing E3 ubiquitin-protein ligases which mediate the ubiquitination and subsequent proteasomal degradation of host target proteins. The polypeptide is Kelch repeat and BTB domain-containing protein 1 (KBTB1) (Cowpox virus (strain Brighton Red) (CPV)).